Here is a 139-residue protein sequence, read N- to C-terminus: Acyl carrier protein 4, chloroplastic (139 aa).

The transit peptide at 1–55 directs the protein to the chloroplast; the sequence is MASAAAGASICIKSASCSPLAPGRISSLRSVSLPVSRKSFPSLRSSKGSFARVSC. One can recognise a Carrier domain in the interval 59–134; it reads PETVAKVCRI…DAADLIEKLM (76 aa). At S94 the chain carries O-(pantetheine 4'-phosphoryl)serine.

The protein belongs to the acyl carrier protein (ACP) family. In terms of processing, 4'-phosphopantetheine is transferred from CoA to a specific serine of apo-ACP by acpS. This modification is essential for activity because fatty acids are bound in thioester linkage to the sulfhydryl of the prosthetic group.

It localises to the plastid. The protein resides in the chloroplast. The protein operates within lipid metabolism; fatty acid biosynthesis. Functionally, carrier of the growing fatty acid chain in fatty acid biosynthesis. The chain is Acyl carrier protein 4, chloroplastic (ACL1) from Cuphea lanceolata (Cigar flower).